The sequence spans 238 residues: Succinate dehydrogenase assembly factor 2, mitochondrial (238 aa).

The disordered stretch occupies residues 47–82 (GLKADGSRADQAEAGASQSLDKQSRTLDSVRDDTLS). A compositionally biased stretch (basic and acidic residues) spans 68-80 (KQSRTLDSVRDDT).

The protein belongs to the SDHAF2 family. Interacts with the flavoprotein subunit within the SDH catalytic dimer.

The protein localises to the mitochondrion matrix. Plays an essential role in the assembly of succinate dehydrogenase (SDH), an enzyme complex (also referred to as respiratory complex II) that is a component of both the tricarboxylic acid (TCA) cycle and the mitochondrial electron transport chain, and which couples the oxidation of succinate to fumarate with the reduction of ubiquinone (coenzyme Q) to ubiquinol. Required for flavinylation (covalent attachment of FAD) of the flavoprotein subunit of the SDH catalytic dimer. This chain is Succinate dehydrogenase assembly factor 2, mitochondrial, found in Mycosarcoma maydis (Corn smut fungus).